Reading from the N-terminus, the 572-residue chain is Squalene monooxygenase (572 aa).

Residues 1–19 (MWTFLGIATFTYFYKKCGD) lie on the Cytoplasmic side of the membrane. The segment at 1-98 (MWTFLGIATF…EQLESKKCRK (98 aa)) is interaction with MARCHF6. The stretch at 20-40 (VTLANKELLLCVLVFLSLGLV) is an intramembrane region. At 41-572 (LSYRCRHRHG…IYSEMKYLVH (532 aa)) the chain is on the cytoplasmic side. A required for degradation in response to high membrane cholesterol levels region spans residues 61-72 (QFAAFSDILSAL). The tract at residues 116-572 (TSFVTDPEVI…IYSEMKYLVH (457 aa)) is sufficient for enzyme activity. Residues 131–132 (VL), 151–152 (ER), R159, R232, V248, D406, and M419 contribute to the FAD site. The segment at 514-572 (PLVLIRHFFSVAIYATYFCFKSEPWATKPRALFSSGAVLYKACSILFPLIYSEMKYLVH) is hydrophobic; mediates interaction with membranes.

Belongs to the squalene monooxygenase family. In terms of assembly, interacts (via N-terminal domain) with MARCHF6. Interacts with SMIM22; this interaction modulates lipid droplet formation. FAD serves as cofactor. In terms of processing, ubiquitinated by MARCHF6 in response to high cholesterol levels in intracellular membranes, leading to proteasomal degradation. As to expression, detected in liver.

It localises to the microsome membrane. The protein localises to the endoplasmic reticulum membrane. It carries out the reaction squalene + reduced [NADPH--hemoprotein reductase] + O2 = (S)-2,3-epoxysqualene + oxidized [NADPH--hemoprotein reductase] + H2O + H(+). Its pathway is terpene metabolism; lanosterol biosynthesis; lanosterol from farnesyl diphosphate: step 2/3. In terms of biological role, catalyzes the stereospecific oxidation of squalene to (S)-2,3-epoxysqualene, and is considered to be a rate-limiting enzyme in steroid biosynthesis. In Mus musculus (Mouse), this protein is Squalene monooxygenase (Sqle).